We begin with the raw amino-acid sequence, 69 residues long: Copper chaperone CopZ (69 aa).

The HMA domain maps to 1-67 (MKQEFSVKGM…AINELGYQAE (67 aa)). The Cu cation site is built by Cys-12 and Cys-15.

Monomer in the absence of copper. Homodimer or homooligomer in the presence of copper ions. Interacts with the copper ATPase CopA. Interacts with CopY via a charge-based interaction.

It localises to the cytoplasm. Acts as a copper chaperone by delivering 2 Cu(+) ions to CopY Zn(2+)-bound form. This transfer results in displacement of zinc and dissociation of CopY from the promoter, allowing transcription of the copYZAB operon. This is Copper chaperone CopZ (copZ) from Enterococcus hirae (strain ATCC 9790 / DSM 20160 / JCM 8729 / LMG 6399 / NBRC 3181 / NCIMB 6459 / NCDO 1258 / NCTC 12367 / WDCM 00089 / R).